A 126-amino-acid chain; its full sequence is E3 ubiquitin-protein ligase PPP1R11 (126 aa).

Residues 1–25 (MAEAGAGLSETVTETTVTVTTEPEN) form a disordered region. The residue at position 2 (Ala2) is an N-acetylalanine. Residues 10–22 (ETVTETTVTVTTE) show a composition bias toward low complexity. The interval 52–62 (HMGRRSSKCCC) is atypical RING finger domain 1. Residues 70–126 (FGESSTESDEEEEEGCGHTHCVRGHRKGRRRATLGPTPTTPPQPPDPSQPPPGPMQH) form a disordered region. Ser73 and Ser74 each carry phosphoserine. Position 75 is a phosphothreonine (Thr75). Ser77 is modified (phosphoserine). Residues 85–94 (CGHTHCVRGH) are atypical RING finger domain 2. The span at 89–101 (HCVRGHRKGRRRA) shows a compositional bias: basic residues. A compositionally biased stretch (pro residues) spans 107–126 (PTTPPQPPDPSQPPPGPMQH). Thr109 carries the phosphothreonine modification.

Interacts with TLR2 and UBE2D2. Auto-ubiquitinated. In terms of tissue distribution, widely expressed.

The catalysed reaction is S-ubiquitinyl-[E2 ubiquitin-conjugating enzyme]-L-cysteine + [acceptor protein]-L-lysine = [E2 ubiquitin-conjugating enzyme]-L-cysteine + N(6)-ubiquitinyl-[acceptor protein]-L-lysine.. It participates in protein modification; protein ubiquitination. Its function is as follows. Atypical E3 ubiquitin-protein ligase which ubiquitinates TLR2 at 'Lys-754' leading to its degradation by the proteasome. Plays a role in regulating inflammatory cytokine release and gram-positive bacterial clearance by functioning, in part, through the ubiquitination and degradation of TLR2. Inhibitor of protein phosphatase 1. The sequence is that of E3 ubiquitin-protein ligase PPP1R11 (PPP1R11) from Homo sapiens (Human).